The following is an 886-amino-acid chain: uncharacterized protein (886 aa).

A signal peptide spans 1 to 20 (MKILKSLVLLVLFIVMPAKA). 6 helical membrane passes run 520–540 (VIIF…IEVI), 563–583 (TYFF…VVGA), 609–629 (LLFI…IITI), 647–667 (IIAF…IILM), 680–700 (ISTL…FLLI), and 771–791 (FLVL…SYGL).

This sequence belongs to the TrbL/VirB6 family.

The protein localises to the cell membrane. This is an uncharacterized protein from Rickettsia typhi (strain ATCC VR-144 / Wilmington).